The chain runs to 1848 residues: Histone-lysine N-methyltransferase, H3 lysine-79 specific (1848 aa).

In terms of domain architecture, DOT1 spans 19 to 336 (DVISFAWPLQ…ILERYFQRLK (318 aa)). S-adenosyl-L-methionine contacts are provided by residues 142-145 (YGET), 165-174 (FIDLGSGVGQ), E192, and 228-229 (DF). Disordered regions lie at residues 338-537 (KGGN…TRKA), 558-593 (AVSVPSKESSSKEDPPRAASAGPGRKGRMKKGARGR), 886-908 (LNSVKNSRRNREHRARSQEWPEV), 960-996 (PPPATAPVSIKSSPGHHYKDTTLMPAPKQQQQQQMTL), 1033-1075 (LNED…AQSL), 1165-1190 (HMASLYPAGQQTTPADLGYQRRRSSV), 1221-1333 (QRQQ…TQVS), 1345-1374 (QEKLSQHVTPQATPPLPGHGGAPTSGKTIG), 1432-1463 (VHVRPLSEESQDPQPTSYAQERGPGLGAGGAA), 1486-1508 (ARANAGTAPPATHSSSARSGRDY), 1529-1559 (EQQQKQSKGAGSAGSSSLRGPRLNGANPPLE), 1573-1604 (KYKEETEERQRRAAAAASSSAGPPAGMELPTH), 1637-1713 (SPLA…VDPP), and 1731-1757 (QLSHHQQQQQQMLHHHQSQQQQHLQLT). The span at 339-360 (GGNDHESVGTVRTTRDRAKREA) shows a compositional bias: basic and acidic residues. Positions 364 to 373 (QHHHNNHHSN) are enriched in basic residues. Low complexity predominate over residues 391-405 (ATATAAHQQRHQSQS). A compositionally biased stretch (polar residues) spans 419–428 (SGQQAASKTR). Composition is skewed to low complexity over residues 429–439 (QQLQHQHNQQQ) and 453–474 (DATNGNGGNTTTATNTTSASNG). Phosphoserine is present on residues S491, S492, and S494. Gly residues predominate over residues 507–518 (GSNGGSIGGGSV). Basic residues-rich tracts occupy residues 526 to 535 (TQKKRKKLTR) and 582 to 593 (RKGRMKKGARGR). Residues 1221–1235 (QRQQMRVEEQQQQQQ) show a composition bias toward low complexity. Basic residues predominate over residues 1236 to 1263 (HQHHHHHHHHHPQHRLPQHVQHQHPHQH). Residues 1289–1300 (EPPQTQPLELLP) show a composition bias toward low complexity. S1318, S1324, and S1325 each carry phosphoserine. Positions 1532–1545 (QKQSKGAGSAGSSS) are enriched in low complexity. A compositionally biased stretch (basic and acidic residues) spans 1574–1583 (YKEETEERQR). Composition is skewed to low complexity over residues 1585-1598 (AAAAASSSAGPPAG) and 1681-1696 (HDATTPSPTPSSSSSS). The segment covering 1697-1706 (CGRRSNSNNG) has biased composition (polar residues).

Belongs to the class I-like SAM-binding methyltransferase superfamily. DOT1 family. Broadly expressed in most tissues. Expressed in a large subset of neurons and in a small subset of glial cells.

Its subcellular location is the nucleus. The catalysed reaction is L-lysyl(79)-[histone H3] + 3 S-adenosyl-L-methionine = N(6),N(6),N(6)-trimethyl-L-lysyl(79)-[histone H3] + 3 S-adenosyl-L-homocysteine + 3 H(+). Functionally, histone methyltransferase. Methylates 'Lys-79' of histone H3. Required for Polycomb Group (PcG) and trithorax Group (trxG) maintenance of expression. Also involved in telomeric silencing but do not in centric heterochromatin. Probably participates in pairing sensitivity. The polypeptide is Histone-lysine N-methyltransferase, H3 lysine-79 specific (gpp) (Drosophila melanogaster (Fruit fly)).